Here is a 468-residue protein sequence, read N- to C-terminus: Zinc finger protein 672 (468 aa).

4 consecutive C2H2-type zinc fingers follow at residues 15–37 (YSCS…ERAH), 43–65 (FRCL…RWTH), 71–93 (YICS…LGTH), and 100–123 (CPCR…VRQH). A C2H2-type 5; degenerate zinc finger spans residues 129-151 (HRCPLCARSFRQSALPFHLARAH). 9 C2H2-type zinc fingers span residues 167 to 189 (YHCT…SRIH), 202 to 224 (HRCG…LQRH), 230 to 252 (FKCP…QRTH), 258 to 280 (YACN…QRSH), 286 to 308 (HICA…QRSH), 314 to 336 (FPCP…LRTH), 342 to 364 (YHCE…LRNH), 370 to 392 (HKCP…RKTH), and 398 to 420 (AECT…QRSH).

The protein belongs to the krueppel C2H2-type zinc-finger protein family.

It is found in the nucleus. Functionally, may be involved in transcriptional regulation. The sequence is that of Zinc finger protein 672 (Znf672) from Rattus norvegicus (Rat).